The chain runs to 443 residues: Enolase B (443 aa).

Residues His156 and Glu165 each contribute to the substrate site. Glu208 acts as the Proton donor in catalysis. Positions 243, 296, and 323 each coordinate Mg(2+). Residues Glu296 and Asp323 each coordinate substrate. Residue Lys348 is the Proton acceptor of the active site. Substrate is bound by residues 375–378 (SHRS) and Lys399.

Belongs to the enolase family. Homodimer. Mg(2+) serves as cofactor.

The protein resides in the cytoplasm. It catalyses the reaction (2R)-2-phosphoglycerate = phosphoenolpyruvate + H2O. It participates in carbohydrate degradation; glycolysis; pyruvate from D-glyceraldehyde 3-phosphate: step 4/5. The sequence is that of Enolase B (enoB) from Dictyostelium discoideum (Social amoeba).